Consider the following 63-residue polypeptide: UPF0337 protein RA1131 (63 aa).

The disordered stretch occupies residues 1-63 (MGSAKDKVAG…DAVKGAVDKT (63 aa)). Over residues 34–49 (AKGAAQEAKGGAQQAK) the composition is skewed to low complexity. A compositionally biased stretch (basic and acidic residues) spans 51–63 (KLKDAVKGAVDKT).

It belongs to the UPF0337 (CsbD) family.

The chain is UPF0337 protein RA1131 from Rhizobium meliloti (strain 1021) (Ensifer meliloti).